We begin with the raw amino-acid sequence, 874 residues long: Pentatricopeptide repeat-containing protein At2g17140 (874 aa).

19 PPR repeats span residues 111 to 145, 146 to 180, 181 to 215, 216 to 250, 251 to 285, 290 to 320, 325 to 359, 360 to 394, 395 to 429, 430 to 464, 465 to 499, 523 to 557, 558 to 592, 593 to 627, 628 to 662, 663 to 693, 697 to 731, 732 to 766, and 767 to 797; these read SVYL…GIAP, QTYT…GCKP, NEFT…GVLP, NKVI…GLVP, DIVT…EYLG, NSIT…IREN, SLQS…GIGP, SIYS…GVCP, DAVT…NCLP, NAYT…GYGL, DTVT…GSAA, DLIT…KLQP, DSVA…GCHK, SLET…GISP, NICT…NIAP, NVFS…AVSI, KEGL…GFEL, GTFL…GYGF, and DPAA…MMEM.

The protein belongs to the PPR family. P subfamily.

This chain is Pentatricopeptide repeat-containing protein At2g17140, found in Arabidopsis thaliana (Mouse-ear cress).